We begin with the raw amino-acid sequence, 81 residues long: Beta-catenin-interacting protein 1 (81 aa).

Position 59 is a phosphoserine (S59).

It belongs to the CTNNBIP1 family. Binds CTNNB1. Highly expressed in heart, brain, liver and skeletal muscle. Detected at low levels in kidney, testis and lung.

It is found in the cytoplasm. The protein localises to the nucleus. Functionally, prevents the interaction between CTNNB1 and TCF family members, and acts as a negative regulator of the Wnt signaling pathway. The sequence is that of Beta-catenin-interacting protein 1 (Ctnnbip1) from Mus musculus (Mouse).